The chain runs to 166 residues: Peptide methionine sulfoxide reductase MsrA (166 aa).

Cys11 is a catalytic residue.

It belongs to the MsrA Met sulfoxide reductase family.

The enzyme catalyses L-methionyl-[protein] + [thioredoxin]-disulfide + H2O = L-methionyl-(S)-S-oxide-[protein] + [thioredoxin]-dithiol. It catalyses the reaction [thioredoxin]-disulfide + L-methionine + H2O = L-methionine (S)-S-oxide + [thioredoxin]-dithiol. Its function is as follows. Has an important function as a repair enzyme for proteins that have been inactivated by oxidation. Catalyzes the reversible oxidation-reduction of methionine sulfoxide in proteins to methionine. This is Peptide methionine sulfoxide reductase MsrA from Lachnoclostridium phytofermentans (strain ATCC 700394 / DSM 18823 / ISDg) (Clostridium phytofermentans).